Here is a 432-residue protein sequence, read N- to C-terminus: Hexane cyclase pydB (432 aa).

Positions 1–20 (MMHQSLGLGLVVFVAAPVVA) are cleaved as a signal peptide. Residues Asn59, Asn78, Asn153, and Asn308 are each glycosylated (N-linked (GlcNAc...) asparagine).

Belongs to the Diels-Alderase family.

The protein operates within mycotoxin biosynthesis. Hexane cyclase; part of the gene cluster that mediates the biosynthesis of pyrrocidines, fungal natural products containing a macrocyclic para-cyclophane connected to a decahydrofluorene ring system that show potent antibiotic activities toward Gram-negative bacteria. Within the pathway, pydB functions synergistically with pydE, pydX and pydZ to form the cyclophane. The pathway begins with the PKS-NRPS pydA which, with the help of the trans-enoyl reductase pydC, synthesizes the polyketide-tyrosyl acyl thioester product which can be reductively off-loaded by the terminal reductase (R) domain in pydA. The alpha/beta hydrolase pydG is then required to catalyze the subsequent Knoevenagel condensation that affords the 3-pyrrolin-2-one ring, whereas the four proteins pydB, pydE, pydX and pydZ then function synergistically to form the cyclophane. PydB and the membrane-bound pydX and pydZ are lipid-binding proteins that can sequester and mold the pdyG product into the inverse S-shape. Binding of the medium chain reductase pydE to the complex would trigger the cascade oxidative cyclization. PydY is involved the Diels-Alder cycloaddition that forms the decahydrofluorene core. Additional non-enzymatic hydroxylation yields pyrrocidine A2 which can be further reduced into pyrrocidine B by an endogenous reductase. The protein is Hexane cyclase pydB of Acremonium sp.